The sequence spans 226 residues: Octanoyltransferase (226 aa).

The BPL/LPL catalytic domain maps to 37–220 (GTAGELIWLL…SFSKVFGPVE (184 aa)). Residues 76-83 (RGGQFTYH), 151-153 (AIG), and 164-166 (GIS) each bind substrate. The Acyl-thioester intermediate role is filled by Cys-182.

The protein belongs to the LipB family.

It is found in the cytoplasm. It carries out the reaction octanoyl-[ACP] + L-lysyl-[protein] = N(6)-octanoyl-L-lysyl-[protein] + holo-[ACP] + H(+). It functions in the pathway protein modification; protein lipoylation via endogenous pathway; protein N(6)-(lipoyl)lysine from octanoyl-[acyl-carrier-protein]: step 1/2. Catalyzes the transfer of endogenously produced octanoic acid from octanoyl-acyl-carrier-protein onto the lipoyl domains of lipoate-dependent enzymes. Lipoyl-ACP can also act as a substrate although octanoyl-ACP is likely to be the physiological substrate. The chain is Octanoyltransferase from Caulobacter vibrioides (strain ATCC 19089 / CIP 103742 / CB 15) (Caulobacter crescentus).